Here is a 189-residue protein sequence, read N- to C-terminus: Thymidine kinase (189 aa).

Residues 9-16 and 85-88 each bind ATP; these read GTMNSGKT and DECQ. The active-site Proton acceptor is the glutamate 86. Positions 143, 146, 180, and 183 each coordinate Zn(2+).

It belongs to the thymidine kinase family. Homotetramer.

It is found in the cytoplasm. It catalyses the reaction thymidine + ATP = dTMP + ADP + H(+). This chain is Thymidine kinase, found in Streptococcus agalactiae serotype Ia (strain ATCC 27591 / A909 / CDC SS700).